A 220-amino-acid chain; its full sequence is Protein DGCR6 (220 aa).

Residues 76 to 142 (KSLYNQRLRL…EQRAMDQKIV (67 aa)) are a coiled coil.

It belongs to the gonadal family. As to expression, found in all tissues examined with highest expression in liver, heart and skeletal muscle. Lower levels in pancreas and placenta. Weak expression in brain.

The protein resides in the nucleus. Its function is as follows. May play a role in neural crest cell migration into the third and fourth pharyngeal pouches. The polypeptide is Protein DGCR6 (DGCR6) (Homo sapiens (Human)).